The sequence spans 427 residues: Serine--tRNA ligase (427 aa).

231–233 contacts L-serine; it reads TAE. Position 262–264 (262–264) interacts with ATP; the sequence is RSE. Glu285 serves as a coordination point for L-serine. 349 to 352 serves as a coordination point for ATP; sequence EISS. Ser385 contributes to the L-serine binding site.

It belongs to the class-II aminoacyl-tRNA synthetase family. Type-1 seryl-tRNA synthetase subfamily. In terms of assembly, homodimer. The tRNA molecule binds across the dimer.

It localises to the cytoplasm. The catalysed reaction is tRNA(Ser) + L-serine + ATP = L-seryl-tRNA(Ser) + AMP + diphosphate + H(+). It carries out the reaction tRNA(Sec) + L-serine + ATP = L-seryl-tRNA(Sec) + AMP + diphosphate + H(+). It functions in the pathway aminoacyl-tRNA biosynthesis; selenocysteinyl-tRNA(Sec) biosynthesis; L-seryl-tRNA(Sec) from L-serine and tRNA(Sec): step 1/1. In terms of biological role, catalyzes the attachment of serine to tRNA(Ser). Is also able to aminoacylate tRNA(Sec) with serine, to form the misacylated tRNA L-seryl-tRNA(Sec), which will be further converted into selenocysteinyl-tRNA(Sec). The sequence is that of Serine--tRNA ligase from Rhizobium etli (strain ATCC 51251 / DSM 11541 / JCM 21823 / NBRC 15573 / CFN 42).